The primary structure comprises 837 residues: Zinc fingers and homeoboxes protein 2 (837 aa).

Residues 27 to 77 (VDRAKEKGIGTPQPDVAKDSWAAELENSSKENEVIEVKSMGESQSKKLQGG) form an interaction with EFNB1 region. Thr37 is modified (phosphothreonine). A Glycyl lysine isopeptide (Lys-Gly) (interchain with G-Cter in SUMO2) cross-link involves residue Lys64. C2H2-type zinc fingers lie at residues 78–101 (YECK…DMQH) and 110–133 (YVCA…SKFH). Residues 164-180 (SITTSGPGTGDSDSGIS) are compositionally biased toward low complexity. Residues 164-204 (SITTSGPGTGDSDSGISVSKTPIMKPGKPKADAKKVPKKPE) are disordered. A compositionally biased stretch (basic and acidic residues) spans 192-204 (PKADAKKVPKKPE). The required for homodimerization stretch occupies residues 195 to 358 (DAKKVPKKPE…PAQLAPTKVT (164 aa)). A Phosphothreonine modification is found at Thr207. DNA-binding regions (homeobox) lie at residues 263-324 (NTTK…WSPE), 439-501 (TPAS…IVHI), 530-591 (PQKF…EQAV), and 628-690 (SPSP…TVKW). The segment at 263 to 446 (NTTKYNSALD…PLTPASDRKK (184 aa)) is required for repressor activity. A required for interaction with NFYA region spans residues 263–497 (NTTKYNSALD…SDHRYRCQRG (235 aa)). The tract at residues 317 to 446 (HGISWSPEEV…PLTPASDRKK (130 aa)) is required for nuclear localization. The interval 404-445 (GQKRPLVTPQAAPEPKRPHIAQVPEPPPKVANPPLTPASDRK) is disordered. Pro residues predominate over residues 427 to 439 (PEPPPKVANPPLT). A Glycyl lysine isopeptide (Lys-Gly) (interchain with G-Cter in SUMO2) cross-link involves residue Lys455. Positions 755-837 (PAKDCLPAKP…DCVPAEAGQA (83 aa)) are disordered. Phosphoserine is present on residues Ser825 and Ser827.

It belongs to the ZHX family. Homodimer (via homeobox domain). Heterodimer with ZHX1 (via homeobox domain 1). Heterodimer with ZHX3 (via homeobox domain 1). Heterodimerization with ZHX1 is not necessary for repressor activity. Interacts (via homeobox domain) with NFYA (via N-terminus). Interacts with EFNB1 intracellular domain peptide; the interaction enhances ZHX2 transcriptional repression activity. Ubiquitously expressed. Expressed in podocytes.

The protein resides in the nucleus. Functionally, acts as a transcriptional repressor. Represses the promoter activity of the CDC25C gene stimulated by NFYA. May play a role in retinal development where it regulates the composition of bipolar cell populations, by promoting differentiation of bipolar OFF-type cells. In the brain, may promote maintenance and suppress differentiation of neural progenitor cells in the developing cortex. This Homo sapiens (Human) protein is Zinc fingers and homeoboxes protein 2 (ZHX2).